A 199-amino-acid polypeptide reads, in one-letter code: dTTP/UTP pyrophosphatase (199 aa).

The Proton acceptor role is filled by D75.

It belongs to the Maf family. YhdE subfamily. It depends on a divalent metal cation as a cofactor.

The protein resides in the cytoplasm. It catalyses the reaction dTTP + H2O = dTMP + diphosphate + H(+). It carries out the reaction UTP + H2O = UMP + diphosphate + H(+). In terms of biological role, nucleoside triphosphate pyrophosphatase that hydrolyzes dTTP and UTP. May have a dual role in cell division arrest and in preventing the incorporation of modified nucleotides into cellular nucleic acids. The sequence is that of dTTP/UTP pyrophosphatase from Methylobacillus flagellatus (strain ATCC 51484 / DSM 6875 / VKM B-1610 / KT).